The primary structure comprises 470 residues: Ribosomal protein uS12 methylthiotransferase RimO (470 aa).

The 117-residue stretch at 4 to 120 (TRVYLHTLGC…IARVVSDAQA (117 aa)) folds into the MTTase N-terminal domain. Positions 13, 49, 83, 155, 159, and 162 each coordinate [4Fe-4S] cluster. Residues 141 to 371 (SLPSHTAYLK…MALQQEISRE (231 aa)) form the Radical SAM core domain. The region spanning 374 to 442 (RAMVGRRLEV…EYDLVGHVVA (69 aa)) is the TRAM domain. The interval 447 to 470 (RARRPLPAPAGGETPRRGGLPVVG) is disordered.

Belongs to the methylthiotransferase family. RimO subfamily. [4Fe-4S] cluster is required as a cofactor.

It localises to the cytoplasm. The enzyme catalyses L-aspartate(89)-[ribosomal protein uS12]-hydrogen + (sulfur carrier)-SH + AH2 + 2 S-adenosyl-L-methionine = 3-methylsulfanyl-L-aspartate(89)-[ribosomal protein uS12]-hydrogen + (sulfur carrier)-H + 5'-deoxyadenosine + L-methionine + A + S-adenosyl-L-homocysteine + 2 H(+). Catalyzes the methylthiolation of an aspartic acid residue of ribosomal protein uS12. This chain is Ribosomal protein uS12 methylthiotransferase RimO, found in Anaeromyxobacter sp. (strain Fw109-5).